We begin with the raw amino-acid sequence, 87 residues long: Omega-theraphotoxin-Gr1a (87 aa).

Residues 1 to 24 form the signal peptide; it reads MKAQIFVVVLGLAALSVLCYGSEA. Positions 25 to 49 are excised as a propeptide; the sequence is DESALHEEIFQLLAASDEVPKPQER. Intrachain disulfides connect Cys51–Cys65, Cys58–Cys70, and Cys64–Cys79. Val85 bears the Valine amide mark.

As to expression, expressed by the venom gland.

The protein localises to the secreted. Functionally, inhibits P/Q- (Cav2.1/CACNA1A) and N-type (Cav2.2/CACNA1B) voltage-gated calcium channel by modifying voltage-dependent gating. It selectively and reversibly blocks the calcium channels coupled to glutamate release. Also inhibits potassium channels (Kv2.1/KCNB1) with lower affinity. Has also been shown to weakly inhibit Kv11.1/KCNH2/ERG1, Kv1.2/KCNA2, Kv1.3/KCNA3, Nav1.5/SCN5A, Nav1.7/SCN9A and TRPV1. This is Omega-theraphotoxin-Gr1a from Grammostola rosea (Chilean rose tarantula).